A 130-amino-acid polypeptide reads, in one-letter code: Methylglyoxal synthase (130 aa).

Residues 1 to 130 enclose the MGS-like domain; that stretch reads MSKPRIALIA…DLARNMQDVC (130 aa). Substrate-binding positions include H11, K15, 37-40, and 57-58; these read TGTT and SG. D63 functions as the Proton donor/acceptor in the catalytic mechanism. Substrate is bound at residue H90.

The protein belongs to the methylglyoxal synthase family.

The catalysed reaction is dihydroxyacetone phosphate = methylglyoxal + phosphate. Catalyzes the formation of methylglyoxal from dihydroxyacetone phosphate. This Burkholderia cenocepacia (strain HI2424) protein is Methylglyoxal synthase.